Consider the following 118-residue polypeptide: Disulfide bond formation protein (118 aa).

The signal sequence occupies residues 1 to 27 (MRAKWLWMTAVGSLLITVLTAWGWAAA). The region spanning 28-114 (SSQDSKIVYV…VAEAVLRSFF (87 aa)) is the Thioredoxin domain. A disulfide bridge links Cys-42 with Cys-45.

Belongs to the thioredoxin family.

It localises to the secreted. Functionally, stimulates the oxidation and reduction of disulfide bonds in vitro. The polypeptide is Disulfide bond formation protein (bdb) (Brevibacillus choshinensis).